The chain runs to 131 residues: Methylglyoxal synthase (131 aa).

Positions 1–131 (MKIALIAHDK…GDLDYRKLRK (131 aa)) constitute an MGS-like domain. Substrate contacts are provided by residues H8, K12, 34–37 (TGTT), and 54–55 (SG). Catalysis depends on D60, which acts as the Proton donor/acceptor. H87 contacts substrate.

The protein belongs to the methylglyoxal synthase family.

It catalyses the reaction dihydroxyacetone phosphate = methylglyoxal + phosphate. In terms of biological role, catalyzes the formation of methylglyoxal from dihydroxyacetone phosphate. The polypeptide is Methylglyoxal synthase (Bacillus mycoides (strain KBAB4) (Bacillus weihenstephanensis)).